A 179-amino-acid polypeptide reads, in one-letter code: Large ribosomal subunit protein uL6 (179 aa).

It belongs to the universal ribosomal protein uL6 family. As to quaternary structure, part of the 50S ribosomal subunit.

Its function is as follows. This protein binds to the 23S rRNA, and is important in its secondary structure. It is located near the subunit interface in the base of the L7/L12 stalk, and near the tRNA binding site of the peptidyltransferase center. This chain is Large ribosomal subunit protein uL6, found in Leptospira borgpetersenii serovar Hardjo-bovis (strain JB197).